We begin with the raw amino-acid sequence, 24 residues long: Coenzyme PQQ synthesis protein A (24 aa).

Residues 16-20 (EVTMY) constitute a cross-link (pyrroloquinoline quinone (Glu-Tyr)).

The protein belongs to the PqqA family.

It participates in cofactor biosynthesis; pyrroloquinoline quinone biosynthesis. Its function is as follows. Required for coenzyme pyrroloquinoline quinone (PQQ) biosynthesis. PQQ is probably formed by cross-linking a specific glutamate to a specific tyrosine residue and excising these residues from the peptide. The polypeptide is Coenzyme PQQ synthesis protein A (Methylococcus capsulatus (strain ATCC 33009 / NCIMB 11132 / Bath)).